Here is a 208-residue protein sequence, read N- to C-terminus: LexA repressor (208 aa).

The segment at residues 29–49 (VREICSAVGLSSTSTVHGHIS) is a DNA-binding region (H-T-H motif). Residues Ser129 and Lys167 each act as for autocatalytic cleavage activity in the active site.

Belongs to the peptidase S24 family. As to quaternary structure, homodimer.

It carries out the reaction Hydrolysis of Ala-|-Gly bond in repressor LexA.. In terms of biological role, represses a number of genes involved in the response to DNA damage (SOS response), including recA and lexA. In the presence of single-stranded DNA, RecA interacts with LexA causing an autocatalytic cleavage which disrupts the DNA-binding part of LexA, leading to derepression of the SOS regulon and eventually DNA repair. The polypeptide is LexA repressor (Limosilactobacillus reuteri (strain DSM 20016) (Lactobacillus reuteri)).